The primary structure comprises 188 residues: Elongation factor P (188 aa).

Lys34 carries the post-translational modification N6-(3,6-diaminohexanoyl)-5-hydroxylysine.

It belongs to the elongation factor P family. May be beta-lysylated on the epsilon-amino group of Lys-34 by the combined action of EpmA and EpmB, and then hydroxylated on the C5 position of the same residue by EpmC (if this protein is present). Lysylation is critical for the stimulatory effect of EF-P on peptide-bond formation. The lysylation moiety may extend toward the peptidyltransferase center and stabilize the terminal 3-CCA end of the tRNA. Hydroxylation of the C5 position on Lys-34 may allow additional potential stabilizing hydrogen-bond interactions with the P-tRNA.

It localises to the cytoplasm. The protein operates within protein biosynthesis; polypeptide chain elongation. Involved in peptide bond synthesis. Alleviates ribosome stalling that occurs when 3 or more consecutive Pro residues or the sequence PPG is present in a protein, possibly by augmenting the peptidyl transferase activity of the ribosome. Modification of Lys-34 is required for alleviation. The protein is Elongation factor P of Enterobacter sp. (strain 638).